The primary structure comprises 353 residues: Beta-hexosaminidase (353 aa).

Substrate contacts are provided by residues Asp-74, Arg-82, Arg-149, and 179-180 (KH). Residue His-192 is the Proton donor/acceptor of the active site. Asp-263 functions as the Nucleophile in the catalytic mechanism.

Belongs to the glycosyl hydrolase 3 family. NagZ subfamily.

It is found in the cytoplasm. It carries out the reaction Hydrolysis of terminal non-reducing N-acetyl-D-hexosamine residues in N-acetyl-beta-D-hexosaminides.. The protein operates within cell wall biogenesis; peptidoglycan recycling. Functionally, plays a role in peptidoglycan recycling by cleaving the terminal beta-1,4-linked N-acetylglucosamine (GlcNAc) from peptide-linked peptidoglycan fragments, giving rise to free GlcNAc, anhydro-N-acetylmuramic acid and anhydro-N-acetylmuramic acid-linked peptides. This is Beta-hexosaminidase from Bordetella bronchiseptica (strain ATCC BAA-588 / NCTC 13252 / RB50) (Alcaligenes bronchisepticus).